A 396-amino-acid polypeptide reads, in one-letter code: Elongation factor Tu (396 aa).

The 197-residue stretch at 10–206 (KLHVNVGTIG…ALDTHIPNPE (197 aa)) folds into the tr-type G domain. Residues 19 to 26 (GHVDHGKT) are G1. GTP is bound at residue 19 to 26 (GHVDHGKT). Thr-26 serves as a coordination point for Mg(2+). The segment at 60–64 (GITIS) is G2. The interval 81–84 (DCPG) is G3. Residues 81 to 85 (DCPGH) and 136 to 139 (NKAD) contribute to the GTP site. The G4 stretch occupies residues 136–139 (NKAD). The tract at residues 174–176 (SAL) is G5.

This sequence belongs to the TRAFAC class translation factor GTPase superfamily. Classic translation factor GTPase family. EF-Tu/EF-1A subfamily. As to quaternary structure, monomer.

The protein resides in the cytoplasm. The catalysed reaction is GTP + H2O = GDP + phosphate + H(+). GTP hydrolase that promotes the GTP-dependent binding of aminoacyl-tRNA to the A-site of ribosomes during protein biosynthesis. The sequence is that of Elongation factor Tu from Xylella fastidiosa (strain 9a5c).